Reading from the N-terminus, the 133-residue chain is Small ribosomal subunit protein uS8 (133 aa).

The protein belongs to the universal ribosomal protein uS8 family. As to quaternary structure, part of the 30S ribosomal subunit. Contacts proteins S5 and S12.

In terms of biological role, one of the primary rRNA binding proteins, it binds directly to 16S rRNA central domain where it helps coordinate assembly of the platform of the 30S subunit. The protein is Small ribosomal subunit protein uS8 of Microcystis aeruginosa (strain NIES-843 / IAM M-2473).